Reading from the N-terminus, the 134-residue chain is Arginine decarboxylase proenzyme (134 aa).

Ser-82 functions as the Schiff-base intermediate with substrate; via pyruvic acid in the catalytic mechanism. Ser-82 bears the Pyruvic acid (Ser); by autocatalysis mark. Residue His-87 is the Proton acceptor; for processing activity of the active site. Cys-102 (proton donor; for catalytic activity) is an active-site residue.

This sequence belongs to the prokaryotic AdoMetDC family. Type 1 subfamily. Heterooctamer of four alpha and four beta chains arranged as a tetramer of alpha/beta heterodimers. Pyruvate is required as a cofactor. Is synthesized initially as an inactive proenzyme. Formation of the active enzyme involves a self-maturation process in which the active site pyruvoyl group is generated from an internal serine residue via an autocatalytic post-translational modification. Two non-identical subunits are generated from the proenzyme in this reaction, and the pyruvate is formed at the N-terminus of the alpha chain, which is derived from the carboxyl end of the proenzyme. The post-translation cleavage follows an unusual pathway, termed non-hydrolytic serinolysis, in which the side chain hydroxyl group of the serine supplies its oxygen atom to form the C-terminus of the beta chain, while the remainder of the serine residue undergoes an oxidative deamination to produce ammonia and the pyruvoyl group blocking the N-terminus of the alpha chain.

The catalysed reaction is L-arginine + H(+) = agmatine + CO2. Its pathway is amine and polyamine biosynthesis; agmatine biosynthesis; agmatine from L-arginine: step 1/1. Functionally, specifically catalyzes the decarboxylation of L-arginine to agmatine. Has no S-adenosylmethionine decarboxylase (AdoMetDC) activity. This is Arginine decarboxylase proenzyme from Caldivirga maquilingensis (strain ATCC 700844 / DSM 13496 / JCM 10307 / IC-167).